A 496-amino-acid chain; its full sequence is Cytochrome P450 3A30 (496 aa).

Cys-441 contacts heme.

It belongs to the cytochrome P450 family. Heme is required as a cofactor. In terms of tissue distribution, highly expressed in liver and intestine. Moderate expression in gill and spleen. Low expression in kidney, brain and heart.

The protein resides in the endoplasmic reticulum membrane. The protein localises to the microsome membrane. It catalyses the reaction an organic molecule + reduced [NADPH--hemoprotein reductase] + O2 = an alcohol + oxidized [NADPH--hemoprotein reductase] + H2O + H(+). Functionally, putative steroid 6-beta-hydroxylase. In Fundulus heteroclitus (Killifish), this protein is Cytochrome P450 3A30 (cyp3a30).